A 319-amino-acid polypeptide reads, in one-letter code: G-protein coupled receptor 171 (319 aa).

At 1 to 21 (MTNSSTFCPVYRDLEPFTYFF) the chain is on the extracellular side. Asn3 is a glycosylation site (N-linked (GlcNAc...) asparagine). A helical transmembrane segment spans residues 22-42 (YLVFLIGIIGSCFATWAFIQK). Residues 43–48 (NTNHRC) lie on the Cytoplasmic side of the membrane. Residues 49–69 (VSIYLINLLTADFLLTLALPV) form a helical membrane-spanning segment. Residues 70–89 (KITVDLGVAPWKLRIFHCQV) lie on the Extracellular side of the membrane. The helical transmembrane segment at 90 to 110 (TACLIYINMYLSIIFLAFVSI) threads the bilayer. Residues 111–132 (DRCLQLTYSCKIYRIQEPGFAK) are Cytoplasmic-facing. A helical transmembrane segment spans residues 133–153 (MISAVVWLMVLLIMVPNMIIP). Over 154–181 (IKDIKEKPNVGCMEFKSEFGRNWHLLTN) the chain is Extracellular. A helical membrane pass occupies residues 182-202 (FISIAIFFNFSAIILISNCLV). Residues 203-224 (IRQLYRNKDNENYPNVKRALIS) lie on the Cytoplasmic side of the membrane. A helical membrane pass occupies residues 225–245 (ILLVTTGYIICFVPYHIVRIP). Residues 246-268 (YTLSQTEVISDCSTRISLFKAKE) are Extracellular-facing. Residues 269 to 289 (ATLLLAVSNLCFDPILYYHLS) traverse the membrane as a helical segment. Residues 290 to 319 (KAFRLKITETFASHKESKAQKEKPRSENNA) are Cytoplasmic-facing.

This sequence belongs to the G-protein coupled receptor 1 family.

The protein localises to the cell membrane. Functionally, G-protein coupled receptor for Big LEN, a 16-amino acid neuropeptide produced from the precursor protein, proSAAS (encoded by PCSK1N). Acts through a G(i)-alpha-mediated pathway in response to bigLEN. Big LEN-GPR171 system plays an important role in regulating feeding and metabolism. Also plays a role in modulating fear and anxiety-like behaviors in the basolateral amygdala. Big LEN-GPR171 modulates the mu-type opioid receptor signaling and antinociception. Acts as a negative regulator T cell function. This Bos taurus (Bovine) protein is G-protein coupled receptor 171 (GPR171).